The primary structure comprises 77 residues: Cysteine-rich protein 1 (77 aa).

The LIM zinc-binding domain occupies 2-63 (PKCPKCNKEV…HPCYAAMFGP (62 aa)). An N6-acetyllysine mark is found at K9 and K22. An Omega-N-methylarginine modification is found at R68.

In terms of biological role, seems to have a role in zinc absorption and may function as an intracellular zinc transport protein. In Homo sapiens (Human), this protein is Cysteine-rich protein 1 (CRIP1).